The following is a 141-amino-acid chain: Putative pre-16S rRNA nuclease (141 aa).

The protein belongs to the YqgF nuclease family.

It is found in the cytoplasm. Its function is as follows. Could be a nuclease involved in processing of the 5'-end of pre-16S rRNA. This is Putative pre-16S rRNA nuclease from Chlorobium luteolum (strain DSM 273 / BCRC 81028 / 2530) (Pelodictyon luteolum).